We begin with the raw amino-acid sequence, 127 residues long: Major sperm protein 63 (127 aa).

Ala-2 carries the post-translational modification N-acetylalanine. Residues 9-126 (DIQTQPGTKI…RRKNLPIEYN (118 aa)) form the MSP domain.

As to expression, sperm.

It localises to the cell projection. The protein localises to the pseudopodium. Its subcellular location is the cytoplasm. The protein resides in the cytoskeleton. In terms of biological role, central component in molecular interactions underlying sperm crawling. Forms an extensive filament system that extends from sperm villipoda, along the leading edge of the pseudopod. This Caenorhabditis elegans protein is Major sperm protein 63 (msp-63).